The chain runs to 306 residues: sn-1-specific diacylglycerol lipase ABHD11 (306 aa).

The segment at 19 to 40 (GPSFARVPVAPSSSSGGRGGAE) is disordered. Low complexity predominate over residues 23-33 (ARVPVAPSSSS). Lys78 is subject to N6-succinyllysine. Catalysis depends on charge relay system residues Ser132, Asp228, and His287.

Belongs to the AB hydrolase superfamily. Interacts with OGDH and DLST; this interaction maintains the functional lipoylation of the 2-oxoglutarate dehydrogenase complex. Post-translationally, phosphorylated. In terms of tissue distribution, ubiquitously expressed. Highly expressed in small intestine, prostate and thyroid, while aorta and colon tissues exhibit weak expression levels.

The protein resides in the mitochondrion. It is found in the mitochondrion matrix. The catalysed reaction is 1-octadecanoyl-2-(5Z,8Z,11Z,14Z-eicosatetraenoyl)-sn-glycerol + H2O = 2-(5Z,8Z,11Z,14Z-eicosatetraenoyl)-glycerol + octadecanoate + H(+). It catalyses the reaction a 1,2-diacyl-sn-glycerol + H2O = a 2-acylglycerol + a fatty acid + H(+). The enzyme catalyses a 1,3-diacyl-sn-glycerol + H2O = a 1-acyl-sn-glycerol + a fatty acid + H(+). It carries out the reaction 1-octadecanoyl-2-(9Z-octadecenoyl)-sn-glycerol + H2O = 2-(9Z-octadecenoyl)-glycerol + octadecanoate + H(+). The catalysed reaction is 1-octadecanoyl-2-(4Z,7Z,10Z,13Z,16Z,19Z-docosahexaenoyl)-sn-glycerol + H2O = 2-(4Z,7Z,10Z,13Z,16Z,19Z-docosahexaenoyl)-glycerol + octadecanoate + H(+). It catalyses the reaction 1,2-didecanoylglycerol + H2O = decanoylglycerol + decanoate + H(+). In terms of biological role, catalyzes the hydrolysis of diacylglycerol in vitro and may function as a key regulator in lipid metabolism, namely by regulating the intracellular levels of diacylglycerol. 1,2-diacyl-sn-glycerols are the preferred substrate over 1,3-diacyl-sn-glycerols. The enzyme hydrolyzes stearate in preference to palmitate from the sn-1 position of 1,2-diacyl-sn-glycerols. Maintains the functional lipoylation of the 2-oxoglutarate dehydrogenase complex (OGDHc) through its interaction with the OGDHc by preventing the formation of lipoyl adducts. In addition, is also required for the expansion and differentiation of embryonic stem cells (ESCs). In Homo sapiens (Human), this protein is sn-1-specific diacylglycerol lipase ABHD11.